Reading from the N-terminus, the 228-residue chain is U1 small nuclear ribonucleoprotein C-2 (228 aa).

The segment at 4–36 adopts a Matrin-type zinc-finger fold; it reads YYCDYCDTYLTHDSPSVRKQHNAGYKHKANVRT. The interval 105 to 228 is disordered; sequence PGVRPPILPA…SYALPSEGNH (124 aa). 2 stretches are compositionally biased toward pro residues: residues 107-156 and 164-175; these read VRPP…PPGS and LPRPPTLPPPTS. A compositionally biased stretch (low complexity) spans 178-190; the sequence is PGAPIPNSAAPPA. The segment covering 196–214 has biased composition (pro residues); it reads PPAPAGPTSGAPPAPPTAP.

The protein belongs to the U1 small nuclear ribonucleoprotein C family. In terms of assembly, U1 snRNP is composed of the 7 core Sm proteins B/B', D1, D2, D3, E, F and G that assemble in a heptameric protein ring on the Sm site of the small nuclear RNA to form the core snRNP, and at least 3 U1 snRNP-specific proteins U1-70K, U1-A and U1-C. U1-C interacts with U1 snRNA and the 5' splice-site region of the pre-mRNA.

The protein resides in the nucleus. In terms of biological role, component of the spliceosomal U1 snRNP, which is essential for recognition of the pre-mRNA 5' splice-site and the subsequent assembly of the spliceosome. U1-C is directly involved in initial 5' splice-site recognition for both constitutive and regulated alternative splicing. The interaction with the 5' splice-site seems to precede base-pairing between the pre-mRNA and the U1 snRNA. Stimulates commitment or early (E) complex formation by stabilizing the base pairing of the 5' end of the U1 snRNA and the 5' splice-site region. The chain is U1 small nuclear ribonucleoprotein C-2 from Sorghum bicolor (Sorghum).